The primary structure comprises 349 residues: Cell adhesion molecule CEACAM8 (349 aa).

Residues 1-34 (MGPISAPSCRWRIPWQGLLLTASLFTFWNPPTTA) form the signal peptide. The Ig-like V-type domain maps to 35 to 142 (QLTIEAVPSN…EVTGQFSVHP (108 aa)). 11 N-linked (GlcNAc...) asparagine glycosylation sites follow: asparagine 104, asparagine 111, asparagine 115, asparagine 152, asparagine 173, asparagine 197, asparagine 224, asparagine 256, asparagine 274, asparagine 288, and asparagine 309. Ig-like C2-type domains follow at residues 145-232 (PKPS…VTLN) and 237-319 (PDAP…ITVS). A disulfide bridge links cysteine 167 with cysteine 215. A disulfide bond links cysteine 259 and cysteine 299. Aspartate 320 is lipidated: GPI-anchor amidated aspartate. Positions 321–349 (ALVQGSSPGLSARATVSIMIGVLARVALI) are cleaved as a propeptide — removed in mature form.

The protein belongs to the immunoglobulin superfamily. CEA family. As to quaternary structure, monomer. Heterodimer with CEACAM6; heterodimerizes via its Ig-like V-type domain. In terms of processing, glycosylated. In terms of tissue distribution, expressed in leukocytes of chronic myeloid Leukemia patients and bone marrow.

It localises to the cell membrane. It is found in the cell surface. In terms of biological role, cell surface glycoprotein that plays a role in cell adhesion in a calcium-independent manner. Mediates heterophilic cell adhesion with other carcinoembryonic antigen-related cell adhesion molecules, such as CEACAM6. Heterophilic interaction with CEACAM8 occurs in activated neutrophils. In Homo sapiens (Human), this protein is Cell adhesion molecule CEACAM8.